We begin with the raw amino-acid sequence, 312 residues long: Protoheme IX farnesyltransferase (312 aa).

8 consecutive transmembrane segments (helical) span residues 34–54, 56–76, 119–139, 152–172, 179–199, 225–245, 248–268, and 283–303; these read LVIF…HPVL, ITSL…NMAL, ILVN…YVVI, IVIG…AATG, LLLF…LALF, ILLY…LGYF, VYGV…IEVF, and LFAF…LEAV.

The protein belongs to the UbiA prenyltransferase family. Protoheme IX farnesyltransferase subfamily.

It localises to the cell inner membrane. It carries out the reaction heme b + (2E,6E)-farnesyl diphosphate + H2O = Fe(II)-heme o + diphosphate. It functions in the pathway porphyrin-containing compound metabolism; heme O biosynthesis; heme O from protoheme: step 1/1. In terms of biological role, converts heme B (protoheme IX) to heme O by substitution of the vinyl group on carbon 2 of heme B porphyrin ring with a hydroxyethyl farnesyl side group. The protein is Protoheme IX farnesyltransferase of Bradyrhizobium sp. (strain BTAi1 / ATCC BAA-1182).